Reading from the N-terminus, the 906-residue chain is Cadherin-2A (906 aa).

The signal sequence occupies residues 1-28 (MCRKEPFLLPTALCILAALVLHQGPVEA). Positions 29 to 160 (LGGSRLCKTG…KHNGLQRQKR (132 aa)) are excised as a propeptide. Cadherin domains follow at residues 161–268 (DWVI…RPEF), 269–383 (LHQI…PPEF), 384–498 (TAMT…NPYF), 499–604 (TPNP…DNAP), and 605–714 (YVYP…TTAP). At 161-724 (DWVIPPINVP…IIGTGLGTGA (564 aa)) the chain is on the extracellular side. Ca(2+) contacts are provided by Glu171, Asp227, Glu229, Asp260, Met261, Asn262, Asp263, and Asn264. Asn274 carries an N-linked (GlcNAc...) asparagine glycan. The Ca(2+) site is built by Asp294, Asp296, and Asn302. Asn326 carries an N-linked (GlcNAc...) asparagine glycan. Asp354 lines the Ca(2+) pocket. N-linked (GlcNAc...) asparagine glycosylation is found at Asn403, Asn573, Asn623, Asn652, and Asn693. A helical membrane pass occupies residues 725–746 (IIAILLCIIILLTLVLMFVVWM). The Cytoplasmic segment spans residues 747-906 (KRRDKERQAK…LADMYGGSDD (160 aa)). Disordered regions lie at residues 775–800 (EEGG…EPDT) and 863–884 (SGST…EQDY). A compositionally biased stretch (acidic residues) spans 776–785 (EGGGEEDQDY). Residues 863–880 (SGSTAGSLSSLNSSSSGG) show a composition bias toward low complexity.

Homodimer (via extracellular region). Can also form heterodimers with other cadherins (via extracellular region). Dimerization occurs in trans, i.e. with a cadherin chain from another cell.

It localises to the cell membrane. The protein localises to the sarcolemma. It is found in the cell junction. The protein resides in the cell surface. Its subcellular location is the desmosome. It localises to the adherens junction. Its function is as follows. Calcium-dependent cell adhesion protein; preferentially mediates homotypic cell-cell adhesion. Cadherins may thus contribute to the sorting of heterogeneous cell types, and thereby play an important role during embryonic development. Required for proper neurite branching. Required for pre- and postsynaptic organization. In Xenopus laevis (African clawed frog), this protein is Cadherin-2A (cdh2-a).